Reading from the N-terminus, the 303-residue chain is MRKKLRAVIIGPGNIGTDLLIKMKRSDWIEPVWMVGIDPDSDGLKRARDMGIKTTHQGIDDFIDYLIADDIRIAFDATSAYVHEENSRKLNALGVVMIDLTPAAIGPYCIPPVNLEEHANNLEMNVNMVTCGGQATIPMVAAVSSVQKVDYAEIIATVSSRSVGPGTRANIDEFTRTTASAVEQIGGARKGKAIIVINPAEPPLMMRDTIHCLLSEDPDEVNISKSVYNMVKEVQKYVPGYRLVNGPIFDGRKVSIFMEVEGLGDFLPTYSGNLDIMTAAALRTAEMFAERVASKAITLPNRH.

Cys131 functions as the Acyl-thioester intermediate in the catalytic mechanism. NAD(+) is bound by residues 162–170 (SVGPGTRAN) and Asn273.

This sequence belongs to the acetaldehyde dehydrogenase family.

The catalysed reaction is acetaldehyde + NAD(+) + CoA = acetyl-CoA + NADH + H(+). This chain is Acetaldehyde dehydrogenase, found in Marinomonas sp. (strain MWYL1).